The primary structure comprises 269 residues: GTP cyclohydrolase FolE2 (269 aa).

This sequence belongs to the GTP cyclohydrolase IV family.

It carries out the reaction GTP + H2O = 7,8-dihydroneopterin 3'-triphosphate + formate + H(+). Its pathway is cofactor biosynthesis; 7,8-dihydroneopterin triphosphate biosynthesis; 7,8-dihydroneopterin triphosphate from GTP: step 1/1. Its function is as follows. Converts GTP to 7,8-dihydroneopterin triphosphate. The polypeptide is GTP cyclohydrolase FolE2 (Burkholderia vietnamiensis (strain G4 / LMG 22486) (Burkholderia cepacia (strain R1808))).